Reading from the N-terminus, the 264-residue chain is MFENLNTALTPKLQSSRSFPHLSRPTAPSAAAQGSVEPGGPGLWVGSSQHLKSLGKAVGAKVNDFLRRKEPSSLGSVGTTEVNKTAGAQLAGGADGDDGRSALQEAFPRLDPPPPATRKRTPRALKTTQDMLISSQPVLSSLEYGTELSSGQPQVSSSAQPSPADASQPEATTEVVDRDDALPNGEVSVSVPDLIHKDGQDDPKLKVTECRRASSPGLMERNGLKLSLSPISLAESPEDGSPPPRARTSSVDNEGPHPDLLSFE.

Composition is skewed to polar residues over residues 1–18, 73–83, and 126–139; these read MFENLNTALTPKLQSSRS, SLGSVGTTEVN, and KTTQDMLISSQPVL. Disordered stretches follow at residues 1–47 and 68–264; these read MFEN…WVGS and RKEP…LSFE. Residues 149–171 are compositionally biased toward low complexity; sequence SSGQPQVSSSAQPSPADASQPEA. The span at 194–212 shows a compositional bias: basic and acidic residues; it reads LIHKDGQDDPKLKVTECRR. A phosphoserine mark is found at Ser-214, Ser-215, Ser-241, and Ser-250.

This is an uncharacterized protein from Bos taurus (Bovine).